Consider the following 309-residue polypeptide: Ornithine carbamoyltransferase (309 aa).

Residues 52–55 (STRT), Gln-79, Arg-103, and 130–133 (HPCQ) contribute to the carbamoyl phosphate site. Residues Asn-161, Asp-221, and 225-226 (SM) contribute to the L-ornithine site. Residues 261–262 (CL) and Arg-289 each bind carbamoyl phosphate.

This sequence belongs to the aspartate/ornithine carbamoyltransferase superfamily. OTCase family.

It localises to the cytoplasm. The enzyme catalyses carbamoyl phosphate + L-ornithine = L-citrulline + phosphate + H(+). Its pathway is amino-acid biosynthesis; L-arginine biosynthesis; L-arginine from L-ornithine and carbamoyl phosphate: step 1/3. Functionally, reversibly catalyzes the transfer of the carbamoyl group from carbamoyl phosphate (CP) to the N(epsilon) atom of ornithine (ORN) to produce L-citrulline. The protein is Ornithine carbamoyltransferase of Methanoculleus marisnigri (strain ATCC 35101 / DSM 1498 / JR1).